A 2174-amino-acid chain; its full sequence is Mediator of RNA polymerase II transcription subunit 13 (2174 aa).

Serine 395 is modified (phosphoserine). Residues 435-477 (RNAGQQGQAPSLGQQQQILPKHKTNEKQEKSEKPQKRPLTPFH) form a disordered region. Positions 438 to 451 (GQQGQAPSLGQQQQ) are enriched in low complexity. Over residues 457 to 469 (KTNEKQEKSEKPQ) the composition is skewed to basic and acidic residues. A phosphoserine mark is found at serine 500, serine 504, serine 530, and serine 537. Basic and acidic residues predominate over residues 709 to 730 (FPDKKDRQNSEREAGKKHKVED). Disordered regions lie at residues 709 to 735 (FPDK…TSSV), 749 to 769 (SPSI…PSTS), and 787 to 816 (FNSD…ESKT). Residues 805 to 815 (SDDKASCKESK) are compositionally biased toward basic and acidic residues. Phosphoserine occurs at positions 826 and 890. The segment at 959–1054 (FIKEGDGSNM…ASTPSTCRPL (96 aa)) is disordered. Residues 992–1003 (PPSNSGAGILPS) show a composition bias toward low complexity. Pro residues predominate over residues 1004-1015 (PSTPRFPTPRTP). Serine 1029 is subject to Phosphoserine. Over residues 1040-1053 (DLYSPASTPSTCRP) the composition is skewed to polar residues. Short sequence motifs (LXXLL motif) lie at residues 1188–1192 (LILLL) and 1279–1283 (LRMLL). Polar residues-rich tracts occupy residues 1484 to 1498 (SQSL…NTGN) and 1563 to 1606 (SMNS…SLPT). 3 disordered regions span residues 1484 to 1505 (SQSL…PSAT), 1557 to 1617 (SFPP…ESTM), and 2015 to 2048 (LPAS…RLLS).

The protein belongs to the Mediator complex subunit 13 family. As to quaternary structure, component of the Mediator complex, which is composed of MED1, MED4, MED6, MED7, MED8, MED9, MED10, MED11, MED12, MED13, MED13L, MED14, MED15, MED16, MED17, MED18, MED19, MED20, MED21, MED22, MED23, MED24, MED25, MED26, MED27, MED29, MED30, MED31, CCNC, CDK8 and CDC2L6/CDK11. The MED12, MED13, CCNC and CDK8 subunits form a distinct module termed the CDK8 module. Mediator containing the CDK8 module is less active than Mediator lacking this module in supporting transcriptional activation. Individual preparations of the Mediator complex lacking one or more distinct subunits have been variously termed ARC, CRSP, DRIP, PC2, SMCC and TRAP. In terms of tissue distribution, ubiquitous.

It localises to the nucleus. In terms of biological role, component of the Mediator complex, a coactivator involved in the regulated transcription of nearly all RNA polymerase II-dependent genes. Mediator functions as a bridge to convey information from gene-specific regulatory proteins to the basal RNA polymerase II transcription machinery. Mediator is recruited to promoters by direct interactions with regulatory proteins and serves as a scaffold for the assembly of a functional preinitiation complex with RNA polymerase II and the general transcription factors. The polypeptide is Mediator of RNA polymerase II transcription subunit 13 (Homo sapiens (Human)).